Reading from the N-terminus, the 118-residue chain is uncharacterized protein (118 aa).

4 helical membrane-spanning segments follow: residues Ile12–Phe32, Leu39–Ile59, Ile63–Ile83, and Ser98–Phe118.

Its subcellular location is the cell membrane. This is an uncharacterized protein from Methanocaldococcus jannaschii (strain ATCC 43067 / DSM 2661 / JAL-1 / JCM 10045 / NBRC 100440) (Methanococcus jannaschii).